Reading from the N-terminus, the 740-residue chain is Phosphoribosylformylglycinamidine synthase subunit PurL (740 aa).

Residue His50 is part of the active site. Residues Tyr53 and Lys92 each coordinate ATP. A Mg(2+)-binding site is contributed by Glu94. Substrate contacts are provided by residues 95-98 and Arg117; that span reads SHNH. Residue His96 is the Proton acceptor of the active site. Asp118 is a Mg(2+) binding site. Residue Gln241 participates in substrate binding. Asp269 is a Mg(2+) binding site. Substrate is bound at residue 313 to 315; the sequence is ESQ. Residues Asp495 and Gly532 each coordinate ATP. A Mg(2+)-binding site is contributed by Asn533. Residue Ser535 participates in substrate binding.

Belongs to the FGAMS family. In terms of assembly, monomer. Part of the FGAM synthase complex composed of 1 PurL, 1 PurQ and 2 PurS subunits.

It is found in the cytoplasm. It carries out the reaction N(2)-formyl-N(1)-(5-phospho-beta-D-ribosyl)glycinamide + L-glutamine + ATP + H2O = 2-formamido-N(1)-(5-O-phospho-beta-D-ribosyl)acetamidine + L-glutamate + ADP + phosphate + H(+). It functions in the pathway purine metabolism; IMP biosynthesis via de novo pathway; 5-amino-1-(5-phospho-D-ribosyl)imidazole from N(2)-formyl-N(1)-(5-phospho-D-ribosyl)glycinamide: step 1/2. In terms of biological role, part of the phosphoribosylformylglycinamidine synthase complex involved in the purines biosynthetic pathway. Catalyzes the ATP-dependent conversion of formylglycinamide ribonucleotide (FGAR) and glutamine to yield formylglycinamidine ribonucleotide (FGAM) and glutamate. The FGAM synthase complex is composed of three subunits. PurQ produces an ammonia molecule by converting glutamine to glutamate. PurL transfers the ammonia molecule to FGAR to form FGAM in an ATP-dependent manner. PurS interacts with PurQ and PurL and is thought to assist in the transfer of the ammonia molecule from PurQ to PurL. The polypeptide is Phosphoribosylformylglycinamidine synthase subunit PurL (Brucella canis (strain ATCC 23365 / NCTC 10854 / RM-666)).